An 854-amino-acid chain; its full sequence is Fibronectin-binding protein PlpA (854 aa).

Low complexity predominate over residues 1–24 (MDNNQNNFNQPGQQGFDQYQQQSG). Positions 1–33 (MDNNQNNFNQPGQQGFDQYQQQSGALVSYGYDA) are disordered. Positions 91–109 (QYNQQQNQGYEQQYDEYGN) are fibronectin-binding. 4 disordered regions span residues 247 to 327 (YEQE…LEAP), 411 to 434 (SSNN…EDSN), 743 to 766 (TINP…QLPP), and 835 to 854 (IQPS…YNNR). Positions 258 to 267 (EPAHEQDLRE) are enriched in basic and acidic residues. Composition is skewed to polar residues over residues 311–320 (TVNQPDQTPI) and 411–428 (SSNN…TSNE). A coiled-coil region spans residues 384–622 (NLEEIQKVKL…SSFQKALSEV (239 aa)). Residues 746–764 (PPQPQPQALPQPHPQPQQL) are compositionally biased toward pro residues.

It is found in the cell membrane. In terms of biological role, binds immobilized fibronectin, specifically the gelatin/heparin-binding domain. The chain is Fibronectin-binding protein PlpA (plpA) from Mycoplasmoides gallisepticum (strain R(low / passage 15 / clone 2)) (Mycoplasma gallisepticum).